The following is a 131-amino-acid chain: MVTLFTSPSCTSCRKAKAWLQEHDIPYTERNIFSEHLTIDEIKQILKMTEDGTDEIISTRSKTYQKLNVDIDSLPLQDLYSIIQDNPGLLRRPIILDDKRLQVGYNEDEIRRFLPRKVRTFQLQEAQRLVD.

Residues cysteine 10 and cysteine 13 are joined by a disulfide bond.

This sequence belongs to the ArsC family. Spx subfamily. As to quaternary structure, interacts with the C-terminal domain of the alpha subunit of the RNAP.

The protein resides in the cytoplasm. In terms of biological role, global transcriptional regulator that plays a key role in stress response and exerts either positive or negative regulation of genes. Acts by interacting with the C-terminal domain of the alpha subunit of the RNA polymerase (RNAP). This interaction can enhance binding of RNAP to the promoter region of target genes and stimulate their transcription, or block interaction of RNAP with activator. The sequence is that of Global transcriptional regulator Spx from Staphylococcus epidermidis (strain ATCC 35984 / DSM 28319 / BCRC 17069 / CCUG 31568 / BM 3577 / RP62A).